Reading from the N-terminus, the 375-residue chain is MNTSHLMASLSPAFLQGKNGTNPLDSLYNLSDGCQDSADLLAFIITTYSVETVLGVLGNLCLIFVTTRQKEKSNVTNLLIANLAFSDFLMCLICQPLTVTYTIMDYWIFGEVLCKMLTFIQCMSVTVSILSLVLVALERHQLIINPTGWKPSISQAYLGIVVIWFISCFLSLPFLANSILNDLFHYNHSKVVEFLEDKVVCFVSWSSDHHRLIYTTFLLLFQYCVPLAFILVCYMRIYQRLQRQRRAFHTHTCSSRVGQMKRINGMLMAMVTAFAVLWLPLHVFNTLEDWYQEAIPACHGNLIFLMCHLFAMASTCVNPFIYGFLNINFKKDIKALVLTCRCRPPQGEPEPLPLSTVHTDLSKGSMRMGSKSNVM.

Residues 1–39 (MNTSHLMASLSPAFLQGKNGTNPLDSLYNLSDGCQDSAD) lie on the Extracellular side of the membrane. Residues N2, N19, and N29 are each glycosylated (N-linked (GlcNAc...) asparagine). A helical transmembrane segment spans residues 40-60 (LLAFIITTYSVETVLGVLGNL). The Cytoplasmic portion of the chain corresponds to 61–78 (CLIFVTTRQKEKSNVTNL). The chain crosses the membrane as a helical span at residues 79-99 (LIANLAFSDFLMCLICQPLTV). Residues 100-116 (TYTIMDYWIFGEVLCKM) lie on the Extracellular side of the membrane. C114 and C201 form a disulfide bridge. The chain crosses the membrane as a helical span at residues 117–137 (LTFIQCMSVTVSILSLVLVAL). Residues 138–155 (ERHQLIINPTGWKPSISQ) lie on the Cytoplasmic side of the membrane. A helical transmembrane segment spans residues 156-176 (AYLGIVVIWFISCFLSLPFLA). Residues 177–211 (NSILNDLFHYNHSKVVEFLEDKVVCFVSWSSDHHR) are Extracellular-facing. An N-linked (GlcNAc...) asparagine glycan is attached at N187. A helical transmembrane segment spans residues 212–232 (LIYTTFLLLFQYCVPLAFILV). The Cytoplasmic segment spans residues 233-262 (CYMRIYQRLQRQRRAFHTHTCSSRVGQMKR). The chain crosses the membrane as a helical span at residues 263 to 283 (INGMLMAMVTAFAVLWLPLHV). Topologically, residues 284–301 (FNTLEDWYQEAIPACHGN) are extracellular. A helical membrane pass occupies residues 302 to 322 (LIFLMCHLFAMASTCVNPFIY). Residues 323 to 375 (GFLNINFKKDIKALVLTCRCRPPQGEPEPLPLSTVHTDLSKGSMRMGSKSNVM) lie on the Cytoplasmic side of the membrane. C340 carries the S-palmitoyl cysteine lipid modification.

Belongs to the G-protein coupled receptor 1 family. As to expression, detected in colon and brain.

The protein resides in the cell membrane. In terms of biological role, g protein-coupled receptor for PPY/pancreatic polypeptide/PP that is negatively coupled to cAMP. Has much lower affinity for the NPY/neuropeptide Y and PYY/peptide YY. This chain is Neuropeptide Y receptor type 4 (Npy4r), found in Rattus norvegicus (Rat).